The following is a 211-amino-acid chain: Interleukin-6 (211 aa).

Positions 1–29 (MNSLSTSAFSPVAFSLGLLLVMATAFPTP) are cleaved as a signal peptide. The cysteines at positions 71 and 77 are disulfide-linked. Position 80 is a phosphoserine (S80). Residues C100 and C110 are joined by a disulfide bond.

Belongs to the IL-6 superfamily. Component of a hexamer of two molecules each of IL6, IL6R and IL6ST; first binds to IL6R to associate with the signaling subunit IL6ST. Interacts with IL6R (via the N-terminal ectodomain); this interaction may be affected by IL6R-binding with SORL1, hence decreasing IL6 cis signaling. Interacts with SORL1 (via the N-terminal ectodomain); this interaction leads to IL6 internalization and lysosomal degradation. May form a trimeric complex with the soluble SORL1 ectodomain and soluble IL6R receptor; this interaction might stabilize circulating IL6, hence promoting IL6 trans signaling.

The protein resides in the secreted. Functionally, cytokine with a wide variety of biological functions in immunity, tissue regeneration, and metabolism. Binds to IL6R, then the complex associates to the signaling subunit IL6ST/gp130 to trigger the intracellular IL6-signaling pathway. The interaction with the membrane-bound IL6R and IL6ST stimulates 'classic signaling', whereas the binding of IL6 and soluble IL6R to IL6ST stimulates 'trans-signaling'. Alternatively, 'cluster signaling' occurs when membrane-bound IL6:IL6R complexes on transmitter cells activate IL6ST receptors on neighboring receiver cells. In terms of biological role, IL6 is a potent inducer of the acute phase response. Rapid production of IL6 contributes to host defense during infection and tissue injury, but excessive IL6 synthesis is involved in disease pathology. In the innate immune response, is synthesized by myeloid cells, such as macrophages and dendritic cells, upon recognition of pathogens through toll-like receptors (TLRs) at the site of infection or tissue injury. In the adaptive immune response, is required for the differentiation of B cells into immunoglobulin-secreting cells. Plays a major role in the differentiation of CD4(+) T cell subsets. Essential factor for the development of T follicular helper (Tfh) cells that are required for the induction of germinal-center formation. Required to drive naive CD4(+) T cells to the Th17 lineage. Also required for proliferation of myeloma cells and the survival of plasmablast cells. Its function is as follows. Acts as an essential factor in bone homeostasis and on vessels directly or indirectly by induction of VEGF, resulting in increased angiogenesis activity and vascular permeability. Induces, through 'trans-signaling' and synergistically with IL1B and TNF, the production of VEGF. Involved in metabolic controls, is discharged into the bloodstream after muscle contraction increasing lipolysis and improving insulin resistance. 'Trans-signaling' in central nervous system also regulates energy and glucose homeostasis. Mediates, through GLP-1, crosstalk between insulin-sensitive tissues, intestinal L cells and pancreatic islets to adapt to changes in insulin demand. Also acts as a myokine. Plays a protective role during liver injury, being required for maintenance of tissue regeneration. Also has a pivotal role in iron metabolism by regulating HAMP/hepcidin expression upon inflammation or bacterial infection. Through activation of IL6ST-YAP-NOTCH pathway, induces inflammation-induced epithelial regeneration. The sequence is that of Interleukin-6 (IL6) from Camelus bactrianus (Bactrian camel).